We begin with the raw amino-acid sequence, 334 residues long: Malate dehydrogenase, cytoplasmic (334 aa).

Ser2 is modified (N-acetylserine). Residues Gly11–Ala17 and Asp42 contribute to the NAD(+) site. Substrate contacts are provided by Arg92 and Arg98. Residue Asn105 coordinates NAD(+). At Lys110 the chain carries N6-succinyllysine. Gln112 provides a ligand contact to NAD(+). Residues Lys118 and Lys121 each carry the N6-acetyllysine modification. Val129–Asn131 contacts NAD(+). Substrate-binding residues include Asn131 and Arg162. His187 functions as the Proton acceptor in the catalytic mechanism. Lys214 is modified (N6-succinyllysine). Phosphoserine is present on Ser217. An Omega-N-methylarginine modification is found at Arg230. Residue Ser241 is modified to Phosphoserine. Residue Lys298 is modified to N6-acetyllysine; alternate. An N6-succinyllysine; alternate modification is found at Lys298. Ser309 is subject to Phosphoserine. Lys318 carries the post-translational modification N6-succinyllysine. Ser332 and Ser333 each carry phosphoserine.

Belongs to the LDH/MDH superfamily. MDH type 2 family. As to quaternary structure, homodimer. In terms of processing, ISGylated. Acetylation at Lys-118 dramatically enhances enzymatic activity and promotes adipogenic differentiation.

It is found in the cytoplasm. The protein localises to the cytosol. The enzyme catalyses (S)-malate + NAD(+) = oxaloacetate + NADH + H(+). The catalysed reaction is (2R)-2-hydroxy-3-(4-hydroxyphenyl)propanoate + NAD(+) = 3-(4-hydroxyphenyl)pyruvate + NADH + H(+). It catalyses the reaction (S)-2-hydroxyglutarate + NAD(+) = 2-oxoglutarate + NADH + H(+). In terms of biological role, catalyzes the reduction of aromatic alpha-keto acids in the presence of NADH. Plays essential roles in the malate-aspartate shuttle and the tricarboxylic acid cycle, important in mitochondrial NADH supply for oxidative phosphorylation. Catalyzes the reduction of 2-oxoglutarate to 2-hydroxyglutarate, leading to elevated reactive oxygen species (ROS). The sequence is that of Malate dehydrogenase, cytoplasmic from Homo sapiens (Human).